The chain runs to 164 residues: HTH-type transcriptional regulator IscR (164 aa).

Residues 2-131 (RLTSKGRYAV…SSISLEELVN (130 aa)) enclose the HTH rrf2-type domain. Positions 28 to 51 (LADISERQGISLSYLEQLFSRLRK) form a DNA-binding region, H-T-H motif. 3 residues coordinate [2Fe-2S] cluster: C92, C98, and C104. Residues 141–164 (RQDNDKRRAPNGRAQETINVNLRP) are disordered. A compositionally biased stretch (polar residues) spans 154 to 164 (AQETINVNLRP).

Requires [2Fe-2S] cluster as cofactor.

Functionally, regulates the transcription of several operons and genes involved in the biogenesis of Fe-S clusters and Fe-S-containing proteins. The polypeptide is HTH-type transcriptional regulator IscR (Photorhabdus laumondii subsp. laumondii (strain DSM 15139 / CIP 105565 / TT01) (Photorhabdus luminescens subsp. laumondii)).